Reading from the N-terminus, the 223-residue chain is Deoxyribose-phosphate aldolase (223 aa).

Residue Asp-89 is the Proton donor/acceptor of the active site. Lys-152 acts as the Schiff-base intermediate with acetaldehyde in catalysis. The Proton donor/acceptor role is filled by Lys-181.

It belongs to the DeoC/FbaB aldolase family. DeoC type 1 subfamily.

The protein localises to the cytoplasm. It carries out the reaction 2-deoxy-D-ribose 5-phosphate = D-glyceraldehyde 3-phosphate + acetaldehyde. It functions in the pathway carbohydrate degradation; 2-deoxy-D-ribose 1-phosphate degradation; D-glyceraldehyde 3-phosphate and acetaldehyde from 2-deoxy-alpha-D-ribose 1-phosphate: step 2/2. In terms of biological role, catalyzes a reversible aldol reaction between acetaldehyde and D-glyceraldehyde 3-phosphate to generate 2-deoxy-D-ribose 5-phosphate. The polypeptide is Deoxyribose-phosphate aldolase (Bacillus subtilis (strain 168)).